The chain runs to 66 residues: Large ribosomal subunit protein bL35 (66 aa).

Composition is skewed to basic residues over residues 1 to 16 and 23 to 45; these read MPKQKTHRGLAKRVKR and KRGRAFTSHRFHGKTKKQRRQLR. Residues 1 to 53 form a disordered region; the sequence is MPKQKTHRGLAKRVKRTGGGGLKRGRAFTSHRFHGKTKKQRRQLRKASMVAKG.

It belongs to the bacterial ribosomal protein bL35 family.

This chain is Large ribosomal subunit protein bL35, found in Enterococcus faecalis (strain ATCC 700802 / V583).